Consider the following 295-residue polypeptide: Protease HtpX (295 aa).

2 helical membrane passes run 4–24 (ILLFVATNLAVVLVASITLSL) and 41–61 (SSLLVFCAVFGFAGSLVSLFI). His147 serves as a coordination point for Zn(2+). Glu148 is an active-site residue. His151 contributes to the Zn(2+) binding site. Transmembrane regions (helical) follow at residues 158–178 (VTLALVQGVVNTFVMFFARII) and 199–219 (VATIVAELILGILASMIVMWF). Residue Glu224 participates in Zn(2+) binding.

This sequence belongs to the peptidase M48B family. Zn(2+) serves as cofactor.

It is found in the cell inner membrane. The polypeptide is Protease HtpX (Pseudomonas putida (strain ATCC 700007 / DSM 6899 / JCM 31910 / BCRC 17059 / LMG 24140 / F1)).